Here is a 613-residue protein sequence, read N- to C-terminus: Arginine--tRNA ligase (613 aa).

The 'HIGH' region signature appears at 123-133 (PNVAKPMHVGH).

It belongs to the class-I aminoacyl-tRNA synthetase family. Monomer.

The protein localises to the cytoplasm. The enzyme catalyses tRNA(Arg) + L-arginine + ATP = L-arginyl-tRNA(Arg) + AMP + diphosphate. The sequence is that of Arginine--tRNA ligase from Caulobacter sp. (strain K31).